Here is a 288-residue protein sequence, read N- to C-terminus: Phenazine biosynthesis-like domain-containing protein (288 aa).

Residue glutamate 46 is part of the active site.

The protein belongs to the PhzF family. In terms of assembly, interacts with UNRIP/MAWD.

The sequence is that of Phenazine biosynthesis-like domain-containing protein (PBLD) from Homo sapiens (Human).